A 591-amino-acid chain; its full sequence is V-type ATP synthase alpha chain (591 aa).

233–240 (GPFGAGKT) contacts ATP.

Belongs to the ATPase alpha/beta chains family.

The catalysed reaction is ATP + H2O + 4 H(+)(in) = ADP + phosphate + 5 H(+)(out). Functionally, produces ATP from ADP in the presence of a proton gradient across the membrane. The V-type alpha chain is a catalytic subunit. This chain is V-type ATP synthase alpha chain, found in Streptococcus pyogenes serotype M28 (strain MGAS6180).